Consider the following 880-residue polypeptide: Nonsense-mediated mRNA decay factor SMG7-like (880 aa).

TPR repeat units follow at residues 149-183 (QEQYLKAHEHPNWSTAATYYLEAAKSWPDSGNPHN) and 184-217 (QLAVLATYVSDELLALYHCVRSLAVKEPFPGASN). Residues 669 to 711 (RLGLSKPNGLGPIDETGPVSAFDSLSINSSTEHPASSYSPPTP) form a disordered region. Residues 691–701 (DSLSINSSTEH) are compositionally biased toward polar residues.

May play a role in growth and development. In Arabidopsis thaliana (Mouse-ear cress), this protein is Nonsense-mediated mRNA decay factor SMG7-like.